The chain runs to 261 residues: Protein unc-50 homolog (261 aa).

6 helical membrane-spanning segments follow: residues 37–57 (IFHYPQMDIEYTFWIMFYLCF), 82–102 (AFAVILVFFMAIASMSYAITF), 113–133 (VMFWAVFVDFITVGLLIATIG), 166–186 (SFFPLFIILYVVQFFLLPILL), 190–210 (LFAAILSNTLYIIGFSYYYYV), and 225–245 (VVFLYPIGILFALYIVSVVMG).

Belongs to the unc-50 family.

Its subcellular location is the membrane. This is Protein unc-50 homolog from Dictyostelium discoideum (Social amoeba).